The primary structure comprises 747 residues: Photosystem I P700 chlorophyll a apoprotein A2 (747 aa).

A run of 8 helical transmembrane segments spans residues 46 to 69, 135 to 158, 175 to 199, 273 to 291, 341 to 364, 380 to 406, 428 to 450, and 530 to 548; these read LFAT…FHIA, LFQG…LHLQ, LNHH…HVAI, IAHH…GHMY, LHFQ…QHMG, SALY…IFFV, ALIS…IYVH, and FLVH…LILI. 2 residues coordinate [4Fe-4S] cluster: cysteine 572 and cysteine 581. 2 helical membrane-spanning segments follow: residues 588 to 609 and 656 to 678; these read ATYL…YWHW and LSPW…MFLI. 3 residues coordinate divinyl chlorophyll a: histidine 667, methionine 675, and tyrosine 683. A phylloquinone-binding site is contributed by tryptophan 684. A helical membrane pass occupies residues 720–740; the sequence is LVGLTHFTVGNFVTFGAFVIA.

It belongs to the PsaA/PsaB family. In terms of assembly, the PsaA/B heterodimer binds the P700 divinyl chlorophyll special pair and subsequent electron acceptors. PSI consists of a core antenna complex that captures photons, and an electron transfer chain that converts photonic excitation into a charge separation. The cyanobacterial PSI reaction center is composed of one copy each of PsaA,B,C,D,E,F,I,J,K,L,M and X, and forms trimeric complexes. PSI electron transfer chain: 5 divinyl chlorophyll a, 1 divinyl chlorophyll a', 2 phylloquinones and 3 4Fe-4S clusters. PSI core antenna: 90 divinyl chlorophyll a, 22 carotenoids, 3 phospholipids and 1 galactolipid. P700 is a divinyl chlorophyll a/divinyl chlorophyll a' dimer, A0 is one or more divinyl chlorophyll a, A1 is one or both phylloquinones and FX is a shared 4Fe-4S iron-sulfur center. is required as a cofactor.

The protein resides in the cellular thylakoid membrane. The enzyme catalyses reduced [plastocyanin] + hnu + oxidized [2Fe-2S]-[ferredoxin] = oxidized [plastocyanin] + reduced [2Fe-2S]-[ferredoxin]. PsaA and PsaB bind P700, the primary electron donor of photosystem I (PSI), as well as the electron acceptors A0, A1 and FX. PSI is a plastocyanin/cytochrome c6-ferredoxin oxidoreductase, converting photonic excitation into a charge separation, which transfers an electron from the donor P700 chlorophyll pair to the spectroscopically characterized acceptors A0, A1, FX, FA and FB in turn. Oxidized P700 is reduced on the lumenal side of the thylakoid membrane by plastocyanin or cytochrome c6. This Prochlorococcus marinus (strain SARG / CCMP1375 / SS120) protein is Photosystem I P700 chlorophyll a apoprotein A2.